Reading from the N-terminus, the 31-residue chain is Photosystem II reaction center protein T (31 aa).

A helical membrane pass occupies residues 3–23; the sequence is ALVYTFLLISTLGIIFFGIFF.

Belongs to the PsbT family. As to quaternary structure, PSII is composed of 1 copy each of membrane proteins PsbA, PsbB, PsbC, PsbD, PsbE, PsbF, PsbH, PsbI, PsbJ, PsbK, PsbL, PsbM, PsbT, PsbY, PsbZ, Psb30/Ycf12, at least 3 peripheral proteins of the oxygen-evolving complex and a large number of cofactors. It forms dimeric complexes.

It is found in the plastid. The protein resides in the chloroplast thylakoid membrane. In terms of biological role, found at the monomer-monomer interface of the photosystem II (PS II) dimer, plays a role in assembly and dimerization of PSII. PSII is a light-driven water plastoquinone oxidoreductase, using light energy to abstract electrons from H(2)O, generating a proton gradient subsequently used for ATP formation. This is Photosystem II reaction center protein T from Nephroselmis olivacea (Green alga).